We begin with the raw amino-acid sequence, 619 residues long: 2-isopropylmalate synthase (619 aa).

The Pyruvate carboxyltransferase domain occupies 61–336 (PRWLSTDLRD…SPNLDFSDLT (276 aa)). A divalent metal cation contacts are provided by Asp70, His275, His277, and Asn311.

The protein belongs to the alpha-IPM synthase/homocitrate synthase family. LeuA type 2 subfamily. Homodimer. Requires a divalent metal cation as cofactor.

The protein localises to the cytoplasm. It localises to the mitochondrion. The enzyme catalyses 3-methyl-2-oxobutanoate + acetyl-CoA + H2O = (2S)-2-isopropylmalate + CoA + H(+). The protein operates within amino-acid biosynthesis; L-leucine biosynthesis; L-leucine from 3-methyl-2-oxobutanoate: step 1/4. Functionally, catalyzes the condensation of the acetyl group of acetyl-CoA with 3-methyl-2-oxobutanoate (2-oxoisovalerate) to form 3-carboxy-3-hydroxy-4-methylpentanoate (2-isopropylmalate). This Saccharomyces cerevisiae (strain ATCC 204508 / S288c) (Baker's yeast) protein is 2-isopropylmalate synthase (LEU4).